The following is a 112-amino-acid chain: Replication initiation control protein YabA (112 aa).

Positions 85, 87, 101, and 104 each coordinate Zn(2+).

This sequence belongs to the YabA family. As to quaternary structure, homotetramer. Interacts with both DnaA and DnaN, acting as a bridge between these two proteins. It depends on Zn(2+) as a cofactor.

The protein localises to the cytoplasm. Its subcellular location is the nucleoid. Involved in control of chromosome replication initiation. Inhibits the cooperative binding of DnaA to the oriC region, thus negatively regulating initiation of chromosome replication. Inhibits the ability of DnaA-ATP to form a helix on DNA; does not disassemble preformed DnaA-DNA helices. Decreases the residence time of DnaA on the chromosome at its binding sites (oriC, replication forks and promoter-binding sites). Tethers DnaA to the replication machinery via the DNA polymerase beta sliding clamp subunit (dnaN). Associates with oriC and other DnaA targets on the chromosome in a DnaA-dependent manner. In Lacticaseibacillus casei (strain BL23) (Lactobacillus casei), this protein is Replication initiation control protein YabA.